The following is a 313-amino-acid chain: Formimidoylglutamase (313 aa).

The Mn(2+) site is built by histidine 130, aspartate 155, histidine 157, aspartate 159, aspartate 241, and aspartate 243.

Belongs to the arginase family. Mn(2+) serves as cofactor.

The enzyme catalyses N-formimidoyl-L-glutamate + H2O = formamide + L-glutamate. It participates in amino-acid degradation; L-histidine degradation into L-glutamate; L-glutamate from N-formimidoyl-L-glutamate (hydrolase route): step 1/1. Its function is as follows. Catalyzes the conversion of N-formimidoyl-L-glutamate to L-glutamate and formamide. The protein is Formimidoylglutamase of Salmonella agona (strain SL483).